A 142-amino-acid polypeptide reads, in one-letter code: Transcription antitermination protein NusB (142 aa).

Belongs to the NusB family.

In terms of biological role, involved in transcription antitermination. Required for transcription of ribosomal RNA (rRNA) genes. Binds specifically to the boxA antiterminator sequence of the ribosomal RNA (rrn) operons. The chain is Transcription antitermination protein NusB from Trichlorobacter lovleyi (strain ATCC BAA-1151 / DSM 17278 / SZ) (Geobacter lovleyi).